A 433-amino-acid chain; its full sequence is MVNVVLGSQWGDEGKGKLVDLLVGKYDIVARCAGGNNAGHTIVVNGVKYDFHMLPSGLVNPNCQNLLGNGVVIHVPSFFKELETLEAKGLKNARSRLFVSSRAHLVFDFHQVTDKLRELELSGRSKDGKNIGTTGKGIGPTYSTKASRSGLRVHHLVNDQPGAWEEFVARYKRLLETRRQRYGDFEYDFEAKLAEYKKLREQLKPFVVDSVVFMHNAIEAKKKILVEGANALMLDIDFGTYPYVTSSNTGIGGVLTGLGIPPRTIDEIYGVVKAYTTRVGEGPFPTEQLNENGEKLQTIGAEFGVTTGRKRRCGWLDLVVLKYSTLINGYTSLNITKLDVLDTFKEIPVGISYSIQGKKLDLFPEDLNILGKVEVEYKVLPGWDQDITKITKYEDLPENAKKYLKYIEDFVGVPVEWVGTGPARESMLHKEIK.

GTP contacts are provided by residues 11 to 17 and 39 to 41; these read GDEGKGK and GHT. Residue Asp12 is the Proton acceptor of the active site. Mg(2+) is bound by residues Asp12 and Gly39. Residues 12-15, 37-40, Thr134, Arg148, Asn230, Thr245, and Arg309 each bind IMP; these read DEGK and NAGH. His40 acts as the Proton donor in catalysis. 305-311 contacts substrate; it reads VTTGRKR. GTP-binding positions include Arg311, 337 to 339, and 419 to 421; these read KLD and GTG.

Belongs to the adenylosuccinate synthetase family. In terms of assembly, homodimer. The cofactor is Mg(2+).

The protein localises to the cytoplasm. The catalysed reaction is IMP + L-aspartate + GTP = N(6)-(1,2-dicarboxyethyl)-AMP + GDP + phosphate + 2 H(+). The protein operates within purine metabolism; AMP biosynthesis via de novo pathway; AMP from IMP: step 1/2. Plays an important role in the de novo pathway and in the salvage pathway of purine nucleotide biosynthesis. Catalyzes the first committed step in the biosynthesis of AMP from IMP. In Saccharomyces cerevisiae (strain YJM789) (Baker's yeast), this protein is Adenylosuccinate synthetase.